Here is a 73-residue protein sequence, read N- to C-terminus: Translation initiation factor IF-1 (73 aa).

The region spanning 1 to 73 is the S1-like domain; that stretch reads MAKKDGAIEV…TRGRIVYRYK (73 aa).

This sequence belongs to the IF-1 family. Component of the 30S ribosomal translation pre-initiation complex which assembles on the 30S ribosome in the order IF-2 and IF-3, IF-1 and N-formylmethionyl-tRNA(fMet); mRNA recruitment can occur at any time during PIC assembly.

It is found in the cytoplasm. In terms of biological role, one of the essential components for the initiation of protein synthesis. Stabilizes the binding of IF-2 and IF-3 on the 30S subunit to which N-formylmethionyl-tRNA(fMet) subsequently binds. Helps modulate mRNA selection, yielding the 30S pre-initiation complex (PIC). Upon addition of the 50S ribosomal subunit IF-1, IF-2 and IF-3 are released leaving the mature 70S translation initiation complex. This Mycolicibacterium gilvum (strain PYR-GCK) (Mycobacterium gilvum (strain PYR-GCK)) protein is Translation initiation factor IF-1.